The sequence spans 662 residues: Methionine--tRNA ligase (662 aa).

The short motif at 14–24 (YYPSGKLHLGS) is the 'HIGH' region element. A 'KMSKS' region motif is present at residues 308 to 312 (KMSKS). Residue Lys311 coordinates ATP. The tRNA-binding domain occupies 559–662 (DFEKIELKVA…DDVPAGSLIG (104 aa)).

This sequence belongs to the class-I aminoacyl-tRNA synthetase family. MetG type 2B subfamily. Homodimer.

It is found in the cytoplasm. The catalysed reaction is tRNA(Met) + L-methionine + ATP = L-methionyl-tRNA(Met) + AMP + diphosphate. Is required not only for elongation of protein synthesis but also for the initiation of all mRNA translation through initiator tRNA(fMet) aminoacylation. This is Methionine--tRNA ligase (metG) from Lactococcus lactis subsp. lactis (strain IL1403) (Streptococcus lactis).